A 226-amino-acid polypeptide reads, in one-letter code: Urease accessory protein UreF (226 aa).

The protein belongs to the UreF family. In terms of assembly, ureD, UreF and UreG form a complex that acts as a GTP-hydrolysis-dependent molecular chaperone, activating the urease apoprotein by helping to assemble the nickel containing metallocenter of UreC. The UreE protein probably delivers the nickel.

It localises to the cytoplasm. Required for maturation of urease via the functional incorporation of the urease nickel metallocenter. The protein is Urease accessory protein UreF of Burkholderia ambifaria (strain ATCC BAA-244 / DSM 16087 / CCUG 44356 / LMG 19182 / AMMD) (Burkholderia cepacia (strain AMMD)).